Consider the following 368-residue polypeptide: Nicotinate-nucleotide--dimethylbenzimidazole phosphoribosyltransferase (368 aa).

The active-site Proton acceptor is E314. The tract at residues 344–368 (DRADGADNSADSGASAGTVASDPTV) is disordered. The segment covering 349–360 (ADNSADSGASAG) has biased composition (low complexity).

Belongs to the CobT family.

It catalyses the reaction 5,6-dimethylbenzimidazole + nicotinate beta-D-ribonucleotide = alpha-ribazole 5'-phosphate + nicotinate + H(+). It functions in the pathway nucleoside biosynthesis; alpha-ribazole biosynthesis; alpha-ribazole from 5,6-dimethylbenzimidazole: step 1/2. Its function is as follows. Catalyzes the synthesis of alpha-ribazole-5'-phosphate from nicotinate mononucleotide (NAMN) and 5,6-dimethylbenzimidazole (DMB). This is Nicotinate-nucleotide--dimethylbenzimidazole phosphoribosyltransferase from Corynebacterium efficiens (strain DSM 44549 / YS-314 / AJ 12310 / JCM 11189 / NBRC 100395).